Here is a 351-residue protein sequence, read N- to C-terminus: Dysbindin (351 aa).

Residues 106–179 (FLADLECLTA…AELDAEHAQK (74 aa)) are a coiled coil. Residues 291–325 (RHKLSSLSSTCTDSASQEASEGESPVVQSDEEEVQ) form a disordered region. Over residues 295-306 (SSLSSTCTDSAS) the composition is skewed to low complexity.

It belongs to the dysbindin family. Component of the biogenesis of lysosome-related organelles complex 1 (BLOC-1).

The protein localises to the cytoplasm. It localises to the cytoplasmic vesicle membrane. Its subcellular location is the cytoplasmic vesicle. The protein resides in the secretory vesicle. It is found in the synaptic vesicle membrane. The protein localises to the endosome membrane. It localises to the melanosome membrane. Its subcellular location is the nucleus. The protein resides in the postsynaptic density. It is found in the endoplasmic reticulum. Functionally, component of the BLOC-1 complex, a complex that is required for normal biogenesis of lysosome-related organelles (LRO), such as platelet dense granules and melanosomes. Plays a role in intracellular vesicle trafficking. Plays a role in synaptic vesicle trafficking and in neurotransmitter release. May be required for normal dopamine homeostasis in the cerebral cortex, hippocampus, and hypothalamus. Plays a role in the regulation of cell surface exposure of DRD2. Contributes to the regulation of dopamine signaling. May play a role in actin cytoskeleton reorganization and neurite outgrowth. This is Dysbindin (DTNBP1) from Gallus gallus (Chicken).